The chain runs to 180 residues: ATP synthase subunit delta (180 aa).

The protein belongs to the ATPase delta chain family. F-type ATPases have 2 components, F(1) - the catalytic core - and F(0) - the membrane proton channel. F(1) has five subunits: alpha(3), beta(3), gamma(1), delta(1), epsilon(1). F(0) has three main subunits: a(1), b(2) and c(10-14). The alpha and beta chains form an alternating ring which encloses part of the gamma chain. F(1) is attached to F(0) by a central stalk formed by the gamma and epsilon chains, while a peripheral stalk is formed by the delta and b chains.

Its subcellular location is the cell inner membrane. In terms of biological role, f(1)F(0) ATP synthase produces ATP from ADP in the presence of a proton or sodium gradient. F-type ATPases consist of two structural domains, F(1) containing the extramembraneous catalytic core and F(0) containing the membrane proton channel, linked together by a central stalk and a peripheral stalk. During catalysis, ATP synthesis in the catalytic domain of F(1) is coupled via a rotary mechanism of the central stalk subunits to proton translocation. Functionally, this protein is part of the stalk that links CF(0) to CF(1). It either transmits conformational changes from CF(0) to CF(1) or is implicated in proton conduction. The protein is ATP synthase subunit delta of Legionella pneumophila subsp. pneumophila (strain Philadelphia 1 / ATCC 33152 / DSM 7513).